Here is a 478-residue protein sequence, read N- to C-terminus: MNRIMIVDLVNDLRNKNLEAEEYIERTYEKIGKYDKYINAFITIRSKEEVLKEVKESINKGGKLAGVLIAIKDNISTEGIRTTCASKMLEDYIPPYDATVIEKLKKEGAVIIGKTNMDEFAMGSTTETSYFGPTRNPWDLERTPGGSSGGSGAALAAGYVELALGSDTGGSIRAPAAYNAIFGLKPSYGTVSRFGLVAYANSLEQIGPMARNAEDLGLLFSIIAGPDERDATTINLNLNFELKERSVKNVRIGVLSDILEMSEKPVSGVIKDVVNKLSSEGALIEDTKLGNAEYALPAYYIIAMSEASSNLARYDGVRYGYSKYMEGNWREVYAKNRGEAFGMEVKRRILLGSFILSAGYYEEFYLKALKVRNLIKKNLDELFKKYDILLSPTMPILPPKIGEVINDPVRMYAMDLNTVIANLAAIPALSMPVGFYSDLPIGLQLMGKYLSDIYLINISSFIERNITKLYNLTASVKI.

Catalysis depends on charge relay system residues lysine 72 and serine 147. Serine 171 serves as the catalytic Acyl-ester intermediate.

Belongs to the amidase family. GatA subfamily. Heterotrimer of A, B and C subunits.

The catalysed reaction is L-glutamyl-tRNA(Gln) + L-glutamine + ATP + H2O = L-glutaminyl-tRNA(Gln) + L-glutamate + ADP + phosphate + H(+). Its function is as follows. Allows the formation of correctly charged Gln-tRNA(Gln) through the transamidation of misacylated Glu-tRNA(Gln) in organisms which lack glutaminyl-tRNA synthetase. The reaction takes place in the presence of glutamine and ATP through an activated gamma-phospho-Glu-tRNA(Gln). This Saccharolobus solfataricus (strain ATCC 35092 / DSM 1617 / JCM 11322 / P2) (Sulfolobus solfataricus) protein is Glutamyl-tRNA(Gln) amidotransferase subunit A.